We begin with the raw amino-acid sequence, 468 residues long: Ribulose bisphosphate carboxylase large chain (468 aa).

Lys-5 carries the post-translational modification N6,N6,N6-trimethyllysine. Residues Asn-114 and Thr-164 each contribute to the substrate site. Residue Lys-166 is the Proton acceptor of the active site. Residue Lys-168 participates in substrate binding. Positions 192, 194, and 195 each coordinate Mg(2+). Position 192 is an N6-carboxylysine (Lys-192). Catalysis depends on His-285, which acts as the Proton acceptor. Positions 286, 318, and 370 each coordinate substrate.

The protein belongs to the RuBisCO large chain family. Type I subfamily. As to quaternary structure, heterohexadecamer of 8 large chains and 8 small chains; disulfide-linked. The disulfide link is formed within the large subunit homodimers. Mg(2+) serves as cofactor. In terms of processing, the disulfide bond which can form in the large chain dimeric partners within the hexadecamer appears to be associated with oxidative stress and protein turnover.

Its subcellular location is the plastid. The protein localises to the chloroplast. The catalysed reaction is 2 (2R)-3-phosphoglycerate + 2 H(+) = D-ribulose 1,5-bisphosphate + CO2 + H2O. The enzyme catalyses D-ribulose 1,5-bisphosphate + O2 = 2-phosphoglycolate + (2R)-3-phosphoglycerate + 2 H(+). In terms of biological role, ruBisCO catalyzes two reactions: the carboxylation of D-ribulose 1,5-bisphosphate, the primary event in carbon dioxide fixation, as well as the oxidative fragmentation of the pentose substrate in the photorespiration process. Both reactions occur simultaneously and in competition at the same active site. The chain is Ribulose bisphosphate carboxylase large chain from Solandra grandiflora (Chalice vine).